A 468-amino-acid polypeptide reads, in one-letter code: Methionine aminopeptidase 2 (468 aa).

A compositionally biased stretch (basic and acidic residues) spans 1 to 10; the sequence is MGSKTFEGEG. Positions 1–106 are disordered; the sequence is MGSKTFEGEG…PPRVPLDDLF (106 aa). Residues 16 to 25 are compositionally biased toward polar residues; sequence DPSNSTSPNS. A compositionally biased stretch (basic and acidic residues) spans 31–40; that stretch reads RGAHLSRDGD. Residues 46 to 56 show a composition bias toward acidic residues; sequence GDGDDGADGDE. Positions 61–75 are enriched in polar residues; sequence VTTTPLTEQQPSSET. Over residues 78 to 90 the composition is skewed to basic residues; that stretch reads KKKKRRKPKKKIS. H219 provides a ligand contact to substrate. Residues D240, D251, and H320 each contribute to the a divalent metal cation site. Position 328 (H328) interacts with substrate. Residues E353 and E449 each coordinate a divalent metal cation.

Belongs to the peptidase M24A family. Methionine aminopeptidase eukaryotic type 2 subfamily. Requires Co(2+) as cofactor. It depends on Zn(2+) as a cofactor. Mn(2+) serves as cofactor. The cofactor is Fe(2+).

Its subcellular location is the cytoplasm. The catalysed reaction is Release of N-terminal amino acids, preferentially methionine, from peptides and arylamides.. Functionally, cotranslationally removes the N-terminal methionine from nascent proteins. The N-terminal methionine is often cleaved when the second residue in the primary sequence is small and uncharged (Met-Ala-, Cys, Gly, Pro, Ser, Thr, or Val). The polypeptide is Methionine aminopeptidase 2 (Aspergillus oryzae (strain ATCC 42149 / RIB 40) (Yellow koji mold)).